The primary structure comprises 447 residues: Tubulin beta chain (447 aa).

Residues glutamine 11, glutamate 69, serine 138, glycine 142, threonine 143, glycine 144, asparagine 204, and asparagine 226 each coordinate GTP. Mg(2+) is bound at residue glutamate 69. The interval glutamate 427–glutamate 447 is disordered. Over residues methionine 430–glutamate 447 the composition is skewed to acidic residues.

This sequence belongs to the tubulin family. As to quaternary structure, dimer of alpha and beta chains. A typical microtubule is a hollow water-filled tube with an outer diameter of 25 nm and an inner diameter of 15 nM. Alpha-beta heterodimers associate head-to-tail to form protofilaments running lengthwise along the microtubule wall with the beta-tubulin subunit facing the microtubule plus end conferring a structural polarity. Microtubules usually have 13 protofilaments but different protofilament numbers can be found in some organisms and specialized cells. Mg(2+) is required as a cofactor.

It is found in the cytoplasm. The protein resides in the cytoskeleton. Functionally, tubulin is the major constituent of microtubules, a cylinder consisting of laterally associated linear protofilaments composed of alpha- and beta-tubulin heterodimers. Microtubules grow by the addition of GTP-tubulin dimers to the microtubule end, where a stabilizing cap forms. Below the cap, tubulin dimers are in GDP-bound state, owing to GTPase activity of alpha-tubulin. The sequence is that of Tubulin beta chain (TBB1) from Uromyces fabae (Rust fungus).